The following is a 267-amino-acid chain: MKHVKAVIFDWAGTVVDYGSLAPMGAFVETFGQFGVPITIDEARGPMGMAKRPHIAALMALPRVAQAWTDKYGHAPDDADIDAVYDVFVPKNIAVAASYSSVIPGVADVASALRGDDIRIGTTTGYTREIMAEIVPGAAAQGFSPDSIVCTGDTAEGRPSPYMIYRTLPELGVWRAKEAIKVDDTEVGIEEGINGGTWTVGVSVSGNAFGMAEGDVKALAPDEFAWRRNAAIQKLQAAGAHYVIDSVADLMPVVYDIEARLARGERP.

Catalysis depends on Asp-10, which acts as the Nucleophile. The Mg(2+) site is built by Asp-10 and Ala-12. Lys-51 functions as the Schiff-base intermediate with substrate in the catalytic mechanism. Asp-184 contributes to the Mg(2+) binding site.

It belongs to the HAD-like hydrolase superfamily. PhnX family. In terms of assembly, homodimer. Mg(2+) serves as cofactor.

It carries out the reaction phosphonoacetaldehyde + H2O = acetaldehyde + phosphate + H(+). Involved in phosphonate degradation. The chain is Phosphonoacetaldehyde hydrolase from Paraburkholderia xenovorans (strain LB400).